A 421-amino-acid chain; its full sequence is 3-isopropylmalate dehydratase large subunit (421 aa).

Residues Cys292, Cys352, and Cys355 each coordinate [4Fe-4S] cluster.

It belongs to the aconitase/IPM isomerase family. LeuC type 2 subfamily. In terms of assembly, heterodimer of LeuC and LeuD. [4Fe-4S] cluster is required as a cofactor.

It carries out the reaction (2R,3S)-3-isopropylmalate = (2S)-2-isopropylmalate. The protein operates within amino-acid biosynthesis; L-leucine biosynthesis; L-leucine from 3-methyl-2-oxobutanoate: step 2/4. Functionally, catalyzes the isomerization between 2-isopropylmalate and 3-isopropylmalate, via the formation of 2-isopropylmaleate. In Herpetosiphon aurantiacus (strain ATCC 23779 / DSM 785 / 114-95), this protein is 3-isopropylmalate dehydratase large subunit.